The sequence spans 257 residues: DNA repair protein RecO (257 aa).

This sequence belongs to the RecO family.

Its function is as follows. Involved in DNA repair and RecF pathway recombination. The chain is DNA repair protein RecO from Variovorax paradoxus (strain S110).